The primary structure comprises 154 residues: Myoglobin (154 aa).

Residues 2-148 (GLSDGEWQLV…FRNDIAAKYK (147 aa)) enclose the Globin domain. At serine 4 the chain carries Phosphoserine. Histidine 65 contacts nitrite. An O2-binding site is contributed by histidine 65. Threonine 68 carries the phosphothreonine modification. A heme b-binding site is contributed by histidine 94.

Belongs to the globin family. As to quaternary structure, monomeric.

The protein localises to the cytoplasm. The protein resides in the sarcoplasm. The enzyme catalyses Fe(III)-heme b-[protein] + nitric oxide + H2O = Fe(II)-heme b-[protein] + nitrite + 2 H(+). The catalysed reaction is H2O2 + AH2 = A + 2 H2O. Monomeric heme protein which primary function is to store oxygen and facilitate its diffusion within muscle tissues. Reversibly binds oxygen through a pentacoordinated heme iron and enables its timely and efficient release as needed during periods of heightened demand. Depending on the oxidative conditions of tissues and cells, and in addition to its ability to bind oxygen, it also has a nitrite reductase activity whereby it regulates the production of bioactive nitric oxide. Under stress conditions, like hypoxia and anoxia, it also protects cells against reactive oxygen species thanks to its pseudoperoxidase activity. The sequence is that of Myoglobin (MB) from Tupaia glis (Common tree shrew).